Here is a 729-residue protein sequence, read N- to C-terminus: ATP-dependent RNA helicase DHX15 homolog (729 aa).

The interval 1-25 is disordered; it reads MSKRRIEVGETYGSKAKKDPEASSS. Positions 82–246 constitute a Helicase ATP-binding domain; the sequence is MRLLSLHQCI…FDNAPLMKVP (165 aa). 95 to 102 serves as a coordination point for ATP; it reads GETGSGKT. Residues 193–196 carry the DEAH box motif; the sequence is DEAH. A Helicase C-terminal domain is found at 271–451; that stretch reads TVIQIHMCEE…TVVLQLKKLG (181 aa).

The protein belongs to the DEAD box helicase family. DEAH subfamily. DDX15/PRP43 sub-subfamily.

The catalysed reaction is ATP + H2O = ADP + phosphate + H(+). RNA helicase involved in mRNA processing and antiviral innate immunity. Acts as an activator of the p38 MAPK cascade. In Drosophila melanogaster (Fruit fly), this protein is ATP-dependent RNA helicase DHX15 homolog.